Reading from the N-terminus, the 609-residue chain is Threonine--tRNA ligase (609 aa).

The segment at 1-145 (MRLLLIHSDY…TIVPGAGAAV (145 aa)) is editing domain. Positions 194 to 485 (IHVDLMRSKE…TANQSVPQLP (292 aa)) are catalytic. Cysteine 286, histidine 338, and histidine 458 together coordinate Zn(2+).

It belongs to the class-II aminoacyl-tRNA synthetase family. In terms of assembly, homodimer. Zn(2+) serves as cofactor.

The protein localises to the cytoplasm. The enzyme catalyses tRNA(Thr) + L-threonine + ATP = L-threonyl-tRNA(Thr) + AMP + diphosphate + H(+). In terms of biological role, catalyzes the attachment of threonine to tRNA(Thr) in a two-step reaction: L-threonine is first activated by ATP to form Thr-AMP and then transferred to the acceptor end of tRNA(Thr). Also edits incorrectly charged L-seryl-tRNA(Thr). This Methanosphaerula palustris (strain ATCC BAA-1556 / DSM 19958 / E1-9c) protein is Threonine--tRNA ligase.